We begin with the raw amino-acid sequence, 371 residues long: Cytochrome b (371 aa).

4 consecutive transmembrane segments (helical) span residues 25–45 (FGSM…FLAV), 69–90 (WMMQ…YIHI), 105–125 (WMSG…GYVL), and 170–190 (FFAL…LHII). Heme b is bound by residues H75 and H89. Heme b contacts are provided by H174 and H188. H193 serves as a coordination point for a ubiquinone. Transmembrane regions (helical) follow at residues 218–238 (HKDL…MSFF), 280–300 (LGGA…PFTH), 312–332 (LSQL…WAAT), and 339–358 (FIII…LSFP).

Belongs to the cytochrome b family. The cytochrome bc1 complex contains 3 respiratory subunits (MT-CYB, CYC1 and UQCRFS1), 2 core proteins (UQCRC1 and UQCRC2) and probably 6 low-molecular weight proteins. Heme b is required as a cofactor.

The protein resides in the mitochondrion inner membrane. Its function is as follows. Component of the ubiquinol-cytochrome c reductase complex (complex III or cytochrome b-c1 complex) that is part of the mitochondrial respiratory chain. The b-c1 complex mediates electron transfer from ubiquinol to cytochrome c. Contributes to the generation of a proton gradient across the mitochondrial membrane that is then used for ATP synthesis. The protein is Cytochrome b (MT-CYB) of Apodora papuana (Papuan olive python).